The following is a 63-amino-acid chain: Synergistic-type venom protein C9S3, chain 2 (63 aa).

3 cysteine pairs are disulfide-bonded: cysteine 3-cysteine 24, cysteine 17-cysteine 42, and cysteine 46-cysteine 57.

This sequence belongs to the three-finger toxin family. Short-chain subfamily. Aminergic toxin sub-subfamily. In terms of assembly, heterodimer of C9S3 chain 1 (AC P01408) and chain 2, linked by at least two disulfide bonds. In terms of tissue distribution, expressed by the venom gland.

It is found in the secreted. This protein shows a synergetic toxic effect in that it enhances the toxicity of other D.angusticeps toxins. This is Synergistic-type venom protein C9S3, chain 2 from Dendroaspis angusticeps (Eastern green mamba).